A 173-amino-acid polypeptide reads, in one-letter code: Thiol-disulfide oxidoreductase ResA (173 aa).

A helical; Signal-anchor for type II membrane protein membrane pass occupies residues 10-29 (VIILLILCGAVGFTLYQGYF). Residues 35-173 (MEIGKEAPNF…LEEYLKKITP (139 aa)) enclose the Thioredoxin domain. A disulfide bond links C73 and C76.

This sequence belongs to the thioredoxin family. ResA subfamily.

Its subcellular location is the cell membrane. It participates in protein modification; cytochrome c assembly. In terms of biological role, thiol-disulfide oxidoreductase which is required in disulfide reduction during c-type cytochrome synthesis. May accept reducing equivalents from CcdA, leading to breakage of disulfide bonds in apocytochrome c; following this reduction heme can be covalently attached. The chain is Thiol-disulfide oxidoreductase ResA from Bacillus thuringiensis subsp. konkukian (strain 97-27).